The chain runs to 669 residues: MGKIKELQTSLANKIAAGEVVERPSSVVKELLENAIDAGATEISIEVEESGVQSIRVVDNGSGIEAEDLGLVFHRHATSKLDQDEDLFHIRTLGFRGEALASISSVAKVTLKTCTDNANGNEIYVENGEILNHKPAKAKKGTDILVESLFYNTPARLKYIKSLYTELGKITDIVNRMAMSHPDIRIALISDGKTMLSTNGSGRTNEVMAEIYGMKVARDLVHISGDTSDYHIEGFVAKPEHSRSNKHYISIFINGRYIKNFMLNKAILEGYHTLLTIGRFPICYINIEMDPILVDVNVHPTKLEVRLSKEEQLYQLIVSKIQEAFKDRILIPKNNLDYVPKKNKVLYSFEQQKIEFEQRQNTENNQEKTFSSEESNSKSFMAENQNDEIVIKEDSYNPFVTKTSESLITDDESSGYNNTREKDEDYFKKQQEILQEMDQTFDSNEDASVQNYENKASDDYYDVNDIKGTKSKDPKRRIPYMEIVGQVHGTYIIAQNEFGMYMIDQHAAQERIKYEYFRDKIGEVTNEVQDLLIPLTFHFSKDEQLVIDQYKNELQQVGIMLEHFGGHDYIVSSYPVWFPKDEVEEIIKDMIELILEEKKVDIKKLREDVAIMMSCKKSIKANHYLQKHEMSDLIDQLREAEDPFTCPHGRPIIINFSKYELEKLFKRVM.

Residues 357 to 379 (EQRQNTENNQEKTFSSEESNSKS) form a disordered region. Over residues 361-379 (NTENNQEKTFSSEESNSKS) the composition is skewed to polar residues.

It belongs to the DNA mismatch repair MutL/HexB family.

Its function is as follows. This protein is involved in the repair of mismatches in DNA. It is required for dam-dependent methyl-directed DNA mismatch repair. May act as a 'molecular matchmaker', a protein that promotes the formation of a stable complex between two or more DNA-binding proteins in an ATP-dependent manner without itself being part of a final effector complex. In Staphylococcus aureus (strain Mu3 / ATCC 700698), this protein is DNA mismatch repair protein MutL.